The primary structure comprises 301 residues: Protein translocase subunit SecF (301 aa).

A run of 6 helical transmembrane segments spans residues 17–37, 137–157, 163–183, 190–210, 239–261, and 272–292; these read YIAL…IFQI, DALF…AIRF, IGAT…FYIL, IFIS…VVVF, LSRT…FFGG, and ILGI…VVLL.

Belongs to the SecD/SecF family. SecF subfamily. In terms of assembly, forms a complex with SecD. Part of the essential Sec protein translocation apparatus which comprises SecA, SecYEG and auxiliary proteins SecDF. Other proteins may also be involved.

It localises to the cell inner membrane. Part of the Sec protein translocase complex. Interacts with the SecYEG preprotein conducting channel. SecDF uses the proton motive force (PMF) to complete protein translocation after the ATP-dependent function of SecA. This is Protein translocase subunit SecF from Thermodesulfovibrio yellowstonii (strain ATCC 51303 / DSM 11347 / YP87).